The chain runs to 564 residues: Periplasmic [NiFe] hydrogenase large subunit (564 aa).

Residues C72, C75, C543, and C546 each contribute to the Ni(2+) site. Positions 550 to 564 (VIEPETNEILKFKVC) are excised as a propeptide.

It belongs to the [NiFe]/[NiFeSe] hydrogenase large subunit family. Heterodimer of a large and a small subunit. Ni(2+) is required as a cofactor.

Its subcellular location is the periplasm. It catalyses the reaction 2 Fe(III)-[cytochrome c3] + H2 = 2 Fe(II)-[cytochrome c3] + 2 H(+). This is Periplasmic [NiFe] hydrogenase large subunit (hydB) from Solidesulfovibrio fructosivorans (Desulfovibrio fructosivorans).